We begin with the raw amino-acid sequence, 401 residues long: Chorismate synthase (401 aa).

NADP(+)-binding residues include Arg40 and Arg46. FMN contacts are provided by residues 135–137 (RAS), 256–257 (QA), Gly302, 317–321 (KPISS), and Arg343.

This sequence belongs to the chorismate synthase family. Homotetramer. Requires FMNH2 as cofactor.

The catalysed reaction is 5-O-(1-carboxyvinyl)-3-phosphoshikimate = chorismate + phosphate. The protein operates within metabolic intermediate biosynthesis; chorismate biosynthesis; chorismate from D-erythrose 4-phosphate and phosphoenolpyruvate: step 7/7. Functionally, catalyzes the anti-1,4-elimination of the C-3 phosphate and the C-6 proR hydrogen from 5-enolpyruvylshikimate-3-phosphate (EPSP) to yield chorismate, which is the branch point compound that serves as the starting substrate for the three terminal pathways of aromatic amino acid biosynthesis. This reaction introduces a second double bond into the aromatic ring system. The polypeptide is Chorismate synthase (Saccharopolyspora erythraea (strain ATCC 11635 / DSM 40517 / JCM 4748 / NBRC 13426 / NCIMB 8594 / NRRL 2338)).